A 103-amino-acid chain; its full sequence is MSGRGKGGKGLGKGGAKRHRKILRDNIQGITKPAIRRLARRGGVKRISGLIYEEVRAVLKSFLESVIRDAVTYTEHAKRKTVTSLDVVYALKRQGRTLYGFGG.

A compositionally biased stretch (gly residues) spans 1–14 (MSGRGKGGKGLGKG). The interval 1–20 (MSGRGKGGKGLGKGGAKRHR) is disordered. Lys6 is modified (N6-acetyl-N6-methyllysine; alternate). N6-methyllysine; alternate occurs at positions 6, 9, and 13. Lys13 bears the N6-acetyl-N6-methyllysine; alternate mark. Residues 17 to 21 (KRHRK) mediate DNA binding. The residue at position 92 (Lys92) is an N6-glutaryllysine.

This sequence belongs to the histone H4 family. The nucleosome is a histone octamer containing two molecules each of H2A, H2B, H3 and H4 assembled in one H3-H4 heterotetramer and two H2A-H2B heterodimers. The octamer wraps approximately 147 bp of DNA. In terms of processing, glutarylation at Lys-92 (H4K91glu) destabilizes nucleosomes by promoting dissociation of the H2A-H2B dimers from nucleosomes.

It is found in the nucleus. It localises to the chromosome. Functionally, core component of nucleosome. Nucleosomes wrap and compact DNA into chromatin, limiting DNA accessibility to the cellular machineries which require DNA as a template. Histones thereby play a central role in transcription regulation, DNA repair, DNA replication and chromosomal stability. DNA accessibility is regulated via a complex set of post-translational modifications of histones, also called histone code, and nucleosome remodeling. This is Histone H4 (HHF1) from Candida glabrata (strain ATCC 2001 / BCRC 20586 / JCM 3761 / NBRC 0622 / NRRL Y-65 / CBS 138) (Yeast).